Consider the following 186-residue polypeptide: MSVADIKKSVEQKMQRSIEAFKNDLAKIRTGRAHTGLLDHVQVDYYGSMVPISQVANLTLVDARTIGVQPWEKTMVAKVEKAIREADLGLNPATSGDLIRVPMPPLTEERRRELTKVVKSEGETAKVAVRNLRRDANEQLKKLVKDKEISEDDERRASDDVQKLTDKHVAEIDKLVQAKDAEIMTV.

The protein belongs to the RRF family.

The protein localises to the cytoplasm. Responsible for the release of ribosomes from messenger RNA at the termination of protein biosynthesis. May increase the efficiency of translation by recycling ribosomes from one round of translation to another. The protein is Ribosome-recycling factor of Burkholderia mallei (strain NCTC 10247).